Consider the following 308-residue polypeptide: Ribonuclease HIII (308 aa).

The RNase H type-2 domain occupies 93–308 (MSVLGSDETG…ANTEKARKMI (216 aa)). The a divalent metal cation site is built by Asp-99, Glu-100, and Asp-204.

The protein belongs to the RNase HII family. RnhC subfamily. Requires Mn(2+) as cofactor. Mg(2+) serves as cofactor.

It localises to the cytoplasm. The catalysed reaction is Endonucleolytic cleavage to 5'-phosphomonoester.. Endonuclease that specifically degrades the RNA of RNA-DNA hybrids. This chain is Ribonuclease HIII, found in Lysinibacillus sphaericus (strain C3-41).